The following is a 260-amino-acid chain: NAD-dependent protein deacetylase (260 aa).

A Deacetylase sirtuin-type domain is found at 9–260 (DDIDGETLDA…QVLPAIVERL (252 aa)). NAD(+) is bound by residues Ala35, Thr39, Phe46, Arg47, Gln114, Ile116, Asp117, and His132. Phe46 serves as a coordination point for nicotinamide. Residues Ile116 and Asp117 each contribute to the nicotinamide site. Residue His132 is the Proton acceptor of the active site. Zn(2+)-binding residues include Cys140, Cys143, Cys166, and Cys168. NAD(+) contacts are provided by Ser206, Ser207, Asn231, Asp248, and Val249.

This sequence belongs to the sirtuin family. Class U subfamily. It depends on Zn(2+) as a cofactor.

It is found in the cytoplasm. It carries out the reaction N(6)-acetyl-L-lysyl-[protein] + NAD(+) + H2O = 2''-O-acetyl-ADP-D-ribose + nicotinamide + L-lysyl-[protein]. Its function is as follows. NAD-dependent protein deacetylase which modulates the activities of several enzymes which are inactive in their acetylated form. Deacetylates the N-terminal lysine residue of Alba, the major archaeal chromatin protein and that, in turn, increases Alba's DNA binding affinity, thereby repressing transcription. This is NAD-dependent protein deacetylase from Haloarcula marismortui (strain ATCC 43049 / DSM 3752 / JCM 8966 / VKM B-1809) (Halobacterium marismortui).